We begin with the raw amino-acid sequence, 464 residues long: Glutamate--tRNA ligase (464 aa).

Positions 9–19 (PSPTGYLHIGG) match the 'HIGH' region motif. The 'KMSKS' region signature appears at 242 to 246 (KISKR). Lys245 is a binding site for ATP.

It belongs to the class-I aminoacyl-tRNA synthetase family. Glutamate--tRNA ligase type 1 subfamily. Monomer.

It is found in the cytoplasm. It catalyses the reaction tRNA(Glu) + L-glutamate + ATP = L-glutamyl-tRNA(Glu) + AMP + diphosphate. In terms of biological role, catalyzes the attachment of glutamate to tRNA(Glu) in a two-step reaction: glutamate is first activated by ATP to form Glu-AMP and then transferred to the acceptor end of tRNA(Glu). This chain is Glutamate--tRNA ligase, found in Neisseria meningitidis serogroup B (strain ATCC BAA-335 / MC58).